Here is a 463-residue protein sequence, read N- to C-terminus: 23S rRNA (uracil(1939)-C(5))-methyltransferase RlmD (463 aa).

Positions 6–76 constitute a TRAM domain; sequence KSRKPQQPEY…KRLEEAEMVA (71 aa). Positions 90, 96, 99, and 178 each coordinate [4Fe-4S] cluster. S-adenosyl-L-methionine is bound by residues Gln288, Phe317, Asn322, Glu341, Asp368, and Asp389. Residue Cys415 is the Nucleophile of the active site.

The protein belongs to the class I-like SAM-binding methyltransferase superfamily. RNA M5U methyltransferase family. RlmD subfamily.

The catalysed reaction is uridine(1939) in 23S rRNA + S-adenosyl-L-methionine = 5-methyluridine(1939) in 23S rRNA + S-adenosyl-L-homocysteine + H(+). Functionally, catalyzes the formation of 5-methyl-uridine at position 1939 (m5U1939) in 23S rRNA. The protein is 23S rRNA (uracil(1939)-C(5))-methyltransferase RlmD of Acinetobacter baumannii (strain ACICU).